A 64-amino-acid chain; its full sequence is Large ribosomal subunit protein bL28 (64 aa).

This sequence belongs to the bacterial ribosomal protein bL28 family.

The sequence is that of Large ribosomal subunit protein bL28 from Trichlorobacter lovleyi (strain ATCC BAA-1151 / DSM 17278 / SZ) (Geobacter lovleyi).